The sequence spans 53 residues: UPF0391 membrane protein Patl_1732 (53 aa).

2 helical membrane-spanning segments follow: residues 4–24 (WAVI…GGIA) and 28–48 (AGIA…SVVM).

Belongs to the UPF0391 family.

The protein resides in the cell membrane. This chain is UPF0391 membrane protein Patl_1732, found in Pseudoalteromonas atlantica (strain T6c / ATCC BAA-1087).